We begin with the raw amino-acid sequence, 1088 residues long: RNA-directed RNA polymerase (1088 aa).

Positions 501–687 constitute a RdRp catalytic domain; the sequence is LSYGDVTRFL…AKRYIAGGKI (187 aa).

It belongs to the reoviridae RNA-directed RNA polymerase family. In terms of assembly, interacts with VP3 (Potential). Interacts with VP2; this interaction activates VP1. Interacts with NSP5; this interaction is probably necessary for the formation of functional virus factories. Interacts with NSP2; this interaction is weak. Mg(2+) is required as a cofactor.

The protein resides in the virion. It catalyses the reaction RNA(n) + a ribonucleoside 5'-triphosphate = RNA(n+1) + diphosphate. RNA-directed RNA polymerase that is involved in both transcription and genome replication. Together with VP3 capping enzyme, forms an enzyme complex positioned near the channels situated at each of the five-fold vertices of the core. Following infection, the outermost layer of the virus is lost, leaving a double-layered particle (DLP) made up of the core and VP6 shell. VP1 then catalyzes the transcription of fully conservative plus-strand genomic RNAs that are extruded through the DLP's channels into the cytoplasm where they function as mRNAs for translation of viral proteins. One copy of each of the viral (+)RNAs is also recruited during core assembly, together with newly synthesized polymerase complexes and VP2. The polymerase of these novo-formed particles catalyzes the synthesis of complementary minus-strands leading to dsRNA formation. To do so, the polymerase specifically recognizes and binds 4 bases 5'-UGUG-3' in the conserved 3'-sequence of plus-strand RNA templates. VP2 presumably activates the autoinhibited VP1-RNA complex to coordinate packaging and genome replication. Once dsRNA synthesis is complete, the polymerase switches to the transcriptional mode, thus providing secondary transcription. This is RNA-directed RNA polymerase from Rotavirus A (isolate RVA/Human/United States/WI61/1983/G9P1A[8]) (RV-A).